Consider the following 588-residue polypeptide: Calicin (588 aa).

The BTB domain maps to 12–124 (SFVLQNLNRQ…RLRVHCNDFL (113 aa)). Positions 133–235 (CLRYLFLAEL…NAVSNKTLVF (103 aa)) constitute a BACK domain. Serine 149 is modified (phosphoserine). Kelch repeat units follow at residues 280–327 (SVVI…SAGR), 328–375 (YIYI…TCGG), 377–423 (VYSV…TKGD), 425–475 (HLYI…SFQQ), 476–525 (DNIL…IGDS), and 526–580 (KVFV…LAKL).

As to quaternary structure, interacts with CYLC1; the interaction may be relevant for proper acrosome attachment to the nuclear envelope. Expressed in testis, in spermatozoa (at protein level).

The protein localises to the cytoplasm. It localises to the cytoskeleton. Its subcellular location is the perinuclear theca. The protein resides in the calyx. Functionally, required for both nuclear and acrosomal shaping during spermiogenesis. The sequence is that of Calicin (CCIN) from Homo sapiens (Human).